Consider the following 311-residue polypeptide: Bifunctional protein FolD (311 aa).

Position 174–176 (174–176 (GKG)) interacts with NADP(+).

This sequence belongs to the tetrahydrofolate dehydrogenase/cyclohydrolase family. As to quaternary structure, homodimer.

It carries out the reaction (6R)-5,10-methylene-5,6,7,8-tetrahydrofolate + NADP(+) = (6R)-5,10-methenyltetrahydrofolate + NADPH. The enzyme catalyses (6R)-5,10-methenyltetrahydrofolate + H2O = (6R)-10-formyltetrahydrofolate + H(+). The protein operates within one-carbon metabolism; tetrahydrofolate interconversion. Its function is as follows. Catalyzes the oxidation of 5,10-methylenetetrahydrofolate to 5,10-methenyltetrahydrofolate and then the hydrolysis of 5,10-methenyltetrahydrofolate to 10-formyltetrahydrofolate. The chain is Bifunctional protein FolD from Pyrobaculum arsenaticum (strain DSM 13514 / JCM 11321 / PZ6).